Reading from the N-terminus, the 399-residue chain is Argininosuccinate synthase (399 aa).

8–16 (AYSGGLDTS) contacts ATP. Tyr87 provides a ligand contact to L-citrulline. Position 117 (Gly117) interacts with ATP. Residues Thr119, Asn123, and Asp124 each contribute to the L-aspartate site. L-citrulline is bound at residue Asn123. Positions 127, 175, 260, and 272 each coordinate L-citrulline.

It belongs to the argininosuccinate synthase family. Type 1 subfamily. As to quaternary structure, homotetramer.

Its subcellular location is the cytoplasm. The catalysed reaction is L-citrulline + L-aspartate + ATP = 2-(N(omega)-L-arginino)succinate + AMP + diphosphate + H(+). Its pathway is amino-acid biosynthesis; L-arginine biosynthesis; L-arginine from L-ornithine and carbamoyl phosphate: step 2/3. This Rhodococcus erythropolis (strain PR4 / NBRC 100887) protein is Argininosuccinate synthase.